The sequence spans 397 residues: Flavohemoprotein A (397 aa).

The Globin domain maps to 2–137 (SLSQQSISII…IAQAFIDAEA (136 aa)). H84 is a heme b binding site. Active-site charge relay system residues include Y94 and E136. The tract at residues 150–397 (WRDTREFIVD…YEIFGPLTNV (248 aa)) is reductase. Residues 151-266 (RDTREFIVDR…SPPAGDYVVD (116 aa)) enclose the FAD-binding FR-type domain. Residues Y189 and 208-211 (RHYS) each bind FAD. Residue 279–284 (GVGITP) participates in NADP(+) binding. An FAD-binding site is contributed by 390–393 (IFGP).

Belongs to the globin family. Two-domain flavohemoproteins subfamily. The protein in the C-terminal section; belongs to the flavoprotein pyridine nucleotide cytochrome reductase family. Requires FAD as cofactor. Heme b is required as a cofactor.

The protein resides in the cytoplasm. The enzyme catalyses 2 nitric oxide + NADPH + 2 O2 = 2 nitrate + NADP(+) + H(+). It catalyses the reaction 2 nitric oxide + NADH + 2 O2 = 2 nitrate + NAD(+) + H(+). Its function is as follows. Is involved in NO detoxification in an aerobic process, termed nitric oxide dioxygenase (NOD) reaction that utilizes O(2) and NAD(P)H to convert NO to nitrate, which protects the cell from various noxious nitrogen compounds. Therefore, plays a central role in the inducible response to nitrosative stress. In terms of biological role, in the presence of oxygen and NADH, it has NADH oxidase activity, which leads to the generation of superoxide and H(2)O(2). Under anaerobic conditions, it also exhibits nitric oxide reductase and FAD reductase activities. However, all these reactions are much lower than NOD activity. In Dictyostelium discoideum (Social amoeba), this protein is Flavohemoprotein A (fhbA).